A 551-amino-acid chain; its full sequence is Glucose-6-phosphate isomerase (551 aa).

Residues 161-162 (GS), 212-217 (SKTFTT), Gln-356, Glu-360, His-391, and Lys-516 each bind D-glucose 6-phosphate. Glu-360 functions as the Proton donor in the catalytic mechanism. Residues His-391 and Lys-516 contribute to the active site.

Belongs to the GPI family. In terms of assembly, homodimer.

The protein localises to the cytoplasm. The protein resides in the cytosol. The enzyme catalyses alpha-D-glucose 6-phosphate = beta-D-fructose 6-phosphate. The protein operates within carbohydrate degradation; glycolysis; D-glyceraldehyde 3-phosphate and glycerone phosphate from D-glucose: step 2/4. Its function is as follows. In the cytoplasm, catalyzes the conversion of glucose-6-phosphate to fructose-6-phosphate, the second step in glycolysis, and the reverse reaction during gluconeogenesis. The protein is Glucose-6-phosphate isomerase (gpi1) of Agaricus bisporus (White button mushroom).